A 393-amino-acid chain; its full sequence is S-adenosylmethionine decarboxylase proenzyme (393 aa).

Residues Glu-11 and Glu-14 contribute to the active site. The active-site Schiff-base intermediate with substrate; via pyruvic acid is the Ser-71. Ser-71 is modified (pyruvic acid (Ser); by autocatalysis). Catalysis depends on Cys-85, which acts as the Proton donor; for catalytic activity. Catalysis depends on proton acceptor; for processing activity residues Ser-236 and His-249.

This sequence belongs to the eukaryotic AdoMetDC family. Pyruvate is required as a cofactor. Is synthesized initially as an inactive proenzyme. Formation of the active enzyme involves a self-maturation process in which the active site pyruvoyl group is generated from an internal serine residue via an autocatalytic post-translational modification. Two non-identical subunits are generated from the proenzyme in this reaction, and the pyruvate is formed at the N-terminus of the alpha chain, which is derived from the carboxyl end of the proenzyme. The post-translation cleavage follows an unusual pathway, termed non-hydrolytic serinolysis, in which the side chain hydroxyl group of the serine supplies its oxygen atom to form the C-terminus of the beta chain, while the remainder of the serine residue undergoes an oxidative deamination to produce ammonia and the pyruvoyl group blocking the N-terminus of the alpha chain.

The enzyme catalyses S-adenosyl-L-methionine + H(+) = S-adenosyl 3-(methylsulfanyl)propylamine + CO2. It functions in the pathway amine and polyamine biosynthesis; S-adenosylmethioninamine biosynthesis; S-adenosylmethioninamine from S-adenosyl-L-methionine: step 1/1. The chain is S-adenosylmethionine decarboxylase proenzyme (SAMDC) from Hordeum chilense (Barley).